A 156-amino-acid polypeptide reads, in one-letter code: Small ribosomal subunit protein uS7 (156 aa).

It belongs to the universal ribosomal protein uS7 family. In terms of assembly, part of the 30S ribosomal subunit. Contacts proteins S9 and S11.

Its function is as follows. One of the primary rRNA binding proteins, it binds directly to 16S rRNA where it nucleates assembly of the head domain of the 30S subunit. Is located at the subunit interface close to the decoding center, probably blocks exit of the E-site tRNA. This is Small ribosomal subunit protein uS7 from Polynucleobacter necessarius subsp. necessarius (strain STIR1).